The primary structure comprises 805 residues: Leucine--tRNA ligase (805 aa).

The short motif at 40 to 51 is the 'HIGH' region element; the sequence is PYPSGSGLHVGH. A 'KMSKS' region motif is present at residues 576 to 580; it reads KMSKS. Lys-579 lines the ATP pocket.

The protein belongs to the class-I aminoacyl-tRNA synthetase family.

The protein resides in the cytoplasm. It carries out the reaction tRNA(Leu) + L-leucine + ATP = L-leucyl-tRNA(Leu) + AMP + diphosphate. The polypeptide is Leucine--tRNA ligase (Chlorobium phaeovibrioides (strain DSM 265 / 1930) (Prosthecochloris vibrioformis (strain DSM 265))).